Here is a 68-residue protein sequence, read N- to C-terminus: MADMKSDDIRAMSEDQMDEAILGLKKERFNLRFQRATGQLENTSRLREARREIARIKTIAAQKRAAKK.

Belongs to the universal ribosomal protein uL29 family.

This chain is Large ribosomal subunit protein uL29, found in Rhodopseudomonas palustris (strain BisA53).